The following is a 494-amino-acid chain: Ectonucleoside triphosphate diphosphohydrolase 8 (494 aa).

Topologically, residues 1 to 8 (MRLSWKER) are cytoplasmic. The helical transmembrane segment at 9–29 (VFMVLLGVAAASGLTMLILIL) threads the bilayer. Residues 30–465 (VKATNVLLPA…LTQWRAQSYS (436 aa)) lie on the Extracellular side of the membrane. An intrachain disulfide couples Cys-78 to Cys-102. The active-site Proton acceptor is Glu-168. Cys-245 and Cys-291 are joined by a disulfide. 2 N-linked (GlcNAc...) asparagine glycosylation sites follow: Asn-299 and Asn-303. Cys-328 and Cys-334 are joined by a disulfide. N-linked (GlcNAc...) asparagine glycosylation occurs at Asn-362. Cys-380 and Cys-402 are joined by a disulfide. The helical transmembrane segment at 466–486 (IWIAGVVFAVLTLVAILGAAA) threads the bilayer. The Cytoplasmic portion of the chain corresponds to 487–494 (VQLFWTQD).

The protein belongs to the GDA1/CD39 NTPase family. Requires Ca(2+) as cofactor. The cofactor is Mg(2+). Post-translationally, N-glycosylated. In terms of tissue distribution, present in liver, and at lower level in jejunum and kidney. Limited to the canalicular domain of hepatocytes (at protein level).

It is found in the cell membrane. The enzyme catalyses a ribonucleoside 5'-triphosphate + 2 H2O = a ribonucleoside 5'-phosphate + 2 phosphate + 2 H(+). Functionally, canalicular ectonucleoside NTPDase responsible for the main hepatic NTPDase activity. Ectonucleoside NTPDases catalyze the hydrolysis of gamma- and beta-phosphate residues of nucleotides, playing a central role in concentration of extracellular nucleotides. Has activity toward ATP, ADP, UTP and UDP, but not toward AMP. This Rattus norvegicus (Rat) protein is Ectonucleoside triphosphate diphosphohydrolase 8 (Entpd8).